Reading from the N-terminus, the 65-residue chain is Large ribosomal subunit protein bL35 (65 aa).

Residues methionine 1–arginine 30 are disordered. Positions lysine 12–arginine 30 are enriched in basic residues.

The protein belongs to the bacterial ribosomal protein bL35 family.

The chain is Large ribosomal subunit protein bL35 from Alteromonas mediterranea (strain DSM 17117 / CIP 110805 / LMG 28347 / Deep ecotype).